Here is a 493-residue protein sequence, read N- to C-terminus: MSFKDLRSFIDHLEANGELKRISYPVDPHLEMTEIADRVLRAKGPALLFENPTNHSMPVLANLFGTPKRVAMALGKEDPLALRDVGELLAFLKEPEPPRGFKDAISKIPMFKQALNMPPKTVRNPACQQVVKTGDEVDLTQLPIQHCWPGDVAPLVTWGLTITKGPRKSRQNLGIYRQQLLGKNKLIMRWLSHRGGALDFADFKEQFPGERYPVVVALGSDPVTILGAVTPVPDAMSEYAFAGLLRGERTEVCKALSCDLEVPASSEIILEGYIDPDEMAEEGPYGDHTGYYNETDKFPVFTVTHITHRKDPIYHSTYTGRPPDEPAMLGVALNEVFVPILRKQYPEIIDFYLPPEGCSYRMAVISIRKQYPGHAKRVMMGAWSFLRQFMYTKFIVVVDDDVNCRDWNDVIWAITTRMDPKRDTVMIDNTPIDYLDFASPVAGLGSKMGLDATNKREGETNREWGTPIVMDPKVKQKIDSIWDELGIDDSPTL.

Asn-172 contributes to the Mn(2+) binding site. Prenylated FMN contacts are provided by residues 175 to 177 (IYR), 189 to 191 (RWL), and 194 to 195 (RG). Residue Glu-238 participates in Mn(2+) binding. Catalysis depends on Asp-287, which acts as the Proton donor.

Belongs to the UbiD family. In terms of assembly, homohexamer. Requires prenylated FMN as cofactor. The cofactor is Mn(2+).

It localises to the cell membrane. It catalyses the reaction a 4-hydroxy-3-(all-trans-polyprenyl)benzoate + H(+) = a 2-(all-trans-polyprenyl)phenol + CO2. It participates in cofactor biosynthesis; ubiquinone biosynthesis. Its function is as follows. Catalyzes the decarboxylation of 3-octaprenyl-4-hydroxy benzoate to 2-octaprenylphenol, an intermediate step in ubiquinone biosynthesis. The sequence is that of 3-octaprenyl-4-hydroxybenzoate carboxy-lyase from Shewanella sp. (strain MR-4).